Consider the following 132-residue polypeptide: Mini-ribonuclease 3 (132 aa).

Residue Asp17 is part of the active site.

Belongs to the MrnC RNase family. Homodimer. Mg(2+) is required as a cofactor.

It localises to the cytoplasm. Its function is as follows. Involved in correct processing of both the 5' and 3' ends of 23S rRNA precursor. Processes 30S rRNA precursor transcript even in absence of ribonuclease 3 (Rnc); Rnc processes 30S rRNA into smaller rRNA precursors. The polypeptide is Mini-ribonuclease 3 (Enterococcus faecalis (strain ATCC 700802 / V583)).